Here is a 1062-residue protein sequence, read N- to C-terminus: NACHT, LRR and PYD domains-containing protein 2 (1062 aa).

In terms of domain architecture, Pyrin spans 1–94 (MVSSAQMGFN…SERAKDEVRE (94 aa)). The NACHT domain occupies 207-526 (YTVVLYGPAG…LEKEEEEDRD (320 aa)). 213 to 220 (GPAGLGKT) provides a ligand contact to ATP. At S671 the chain carries Phosphoserine. LRR repeat units follow at residues 812-832 (SLTC…KLLY), 841-861 (FLQR…KDLA), 869-889 (ELTH…KFLC), 898-918 (KLQT…CDLT), 926-946 (SLLC…KFLC), 955-976 (NLRC…DLCS), 983-1003 (SLVT…KMLF), and 1010-1033 (SGTL…LLEE).

Belongs to the NLRP family. As to quaternary structure, interacts with CHUK. Interacts with IKBKB. Interacts with IKBKG. Interacts with MEFV. Interacts with PYCARD. Interacts (via pyrin domain) with PYDC2. Interacts with CARD8. In terms of tissue distribution, expressed at high levels in lung, placenta and thymus and at lower levels in ovary, intestine and brain. Highly abundant in oocytes and early embryos, however poorly expressed in somatic tissues such as brain, kidney, liver and spinal cord.

The protein resides in the cytoplasm. In terms of biological role, suppresses TNF- and CD40-induced NFKB1 activity at the level of the IKK complex, by inhibiting NFKBIA degradation induced by TNF. When associated with PYCARD, activates CASP1, leading to the secretion of mature pro-inflammatory cytokine IL1B. May be a component of the inflammasome, a protein complex which also includes PYCARD, CARD8 and CASP1 and whose function would be the activation of pro-inflammatory caspases. This Homo sapiens (Human) protein is NACHT, LRR and PYD domains-containing protein 2 (NLRP2).